The chain runs to 195 residues: Killer cell lectin-like receptor subfamily G member 1 (195 aa).

The Cytoplasmic segment spans residues 1–38 (MTDSVIYSMLELPTATQAQNDYGPQQKSSSSRPSCSCL). The ITIM motif signature appears at 5–10 (VIYSML). The helical; Signal-anchor for type II membrane protein transmembrane segment at 39–59 (VAIALGLLTAVLLSVLLYQWI) threads the bilayer. Residues 60 to 195 (LCQGSNYSTC…KCPFADQALF (136 aa)) lie on the Extracellular side of the membrane. Asn-65 carries N-linked (GlcNAc...) asparagine glycosylation. Cys-75 and Cys-86 are disulfide-bonded. The 104-residue stretch at 82–185 (YGNHCYYFSV…CEVPLHWVCK (104 aa)) folds into the C-type lectin domain. Asn-97, Asn-137, and Asn-150 each carry an N-linked (GlcNAc...) asparagine glycan. Cystine bridges form between Cys-103–Cys-184 and Cys-163–Cys-176.

In terms of assembly, forms a monomer and homodimer; disulfide-linked. Interacts (via ITIM motif) with PTPN11 and INPP5D. As to expression, expressed specifically on natural killer (NK) cells and T-cells, mainly CD8 T-cells.

The protein resides in the cell membrane. In terms of biological role, plays an inhibitory role on natural killer (NK) cells and T-cell functions upon binding to their non-MHC ligands. May mediate missing self recognition by binding to a highly conserved site on classical cadherins, enabling it to monitor expression of E-cadherin/CDH1, N-cadherin/CDH2 and R-cadherin/CDH4 on target cells. The chain is Killer cell lectin-like receptor subfamily G member 1 (KLRG1) from Homo sapiens (Human).